Consider the following 425-residue polypeptide: Serine--tRNA ligase (425 aa).

Thr-230–Glu-232 contacts L-serine. Arg-261–Glu-263 contributes to the ATP binding site. Position 284 (Glu-284) interacts with L-serine. ATP is bound at residue Glu-348–Ser-351. Residue Ser-384 participates in L-serine binding.

This sequence belongs to the class-II aminoacyl-tRNA synthetase family. Type-1 seryl-tRNA synthetase subfamily. Homodimer. The tRNA molecule binds across the dimer.

The protein localises to the cytoplasm. It catalyses the reaction tRNA(Ser) + L-serine + ATP = L-seryl-tRNA(Ser) + AMP + diphosphate + H(+). It carries out the reaction tRNA(Sec) + L-serine + ATP = L-seryl-tRNA(Sec) + AMP + diphosphate + H(+). It functions in the pathway aminoacyl-tRNA biosynthesis; selenocysteinyl-tRNA(Sec) biosynthesis; L-seryl-tRNA(Sec) from L-serine and tRNA(Sec): step 1/1. Functionally, catalyzes the attachment of serine to tRNA(Ser). Is also able to aminoacylate tRNA(Sec) with serine, to form the misacylated tRNA L-seryl-tRNA(Sec), which will be further converted into selenocysteinyl-tRNA(Sec). The protein is Serine--tRNA ligase of Streptococcus pyogenes serotype M28 (strain MGAS6180).